The chain runs to 559 residues: Putative helicase 22 (559 aa).

The Helicase ATP-binding domain occupies 186–347; the sequence is VSDVNVIGNG…EIMGLLGKIS (162 aa). Residue 199-206 participates in ATP binding; that stretch reads APTGSGKS. A DEAH box motif is present at residues 300–303; sequence DEAH. Positions 410-552 constitute a Helicase C-terminal domain; that stretch reads TNKQIISKIK…KMNFIENEYN (143 aa).

This is Putative helicase 22 (SIFV0022) from Sulfolobus islandicus filamentous virus (isolate Iceland/Hveragerdi) (SIFV).